The primary structure comprises 261 residues: MPQNEYIERWQKQHGKRLDHEERTRKRIARESHKQSQDAQTLRGLRAKLYHKKRHAEKIQMRKRIKAQEERDVKSAAPNEPSTTPLPQYLLDRSQATNAKALSSAIKEKRAEKAAKFSVPLPKVKGISEEEMFKVVKTGKKTSKKSWKRMITKPTFVGNDFTRRPVKYERFIRPMGLRYKKANVTHPELGVTVQLPIISVKKNPQSPMYTQLGVLTKGTIIEVNVSELGLVTAGGKVVWGKWAQITNNCENDGCVNAVLLV.

The segment covering 1–36 has biased composition (basic and acidic residues); that stretch reads MPQNEYIERWQKQHGKRLDHEERTRKRIARESHKQS. The tract at residues 1-87 is disordered; that stretch reads MPQNEYIERW…PNEPSTTPLP (87 aa). 2 consecutive short sequence motifs (nuclear localization signal) follow at residues 15–22 and 51–58; these read GKRLDHEE and HKKRHAEK. Residues 45–65 are compositionally biased toward basic residues; sequence LRAKLYHKKRHAEKIQMRKRI.

This sequence belongs to the eukaryotic ribosomal protein eS8 family. Ribosome biogenesis protein NSA2 subfamily. In terms of assembly, component of the pre-66S ribosomal particle. Interacts with NOP7 and RRP1. Interacts with RSA4 (via WD repeats).

The protein resides in the nucleus. Its subcellular location is the nucleolus. Involved in the biogenesis of the 60S ribosomal subunit. May play a part in the quality control of pre-60S particles. In Coccidioides immitis (strain RS) (Valley fever fungus), this protein is Ribosome biogenesis protein NSA2 (NSA2).